A 213-amino-acid polypeptide reads, in one-letter code: Adenylate kinase (213 aa).

10–15 contributes to the ATP binding site; sequence GAGKGT. The NMP stretch occupies residues 30–59; it reads STGNLLRDEVKSKTDLGVDIEKLISNGKFV. AMP is bound by residues T31, R36, 57–59, 85–88, and Q92; these read KFV and GYPR. Residues 126-162 are LID; sequence GRMTCEKCNMTLNEYFNKEQIELHPCGVEHLKKRKDD. Position 127 (R127) interacts with ATP. Positions 159 and 170 each coordinate AMP. G198 serves as a coordination point for ATP.

The protein belongs to the adenylate kinase family. As to quaternary structure, monomer.

The protein resides in the cytoplasm. The catalysed reaction is AMP + ATP = 2 ADP. It participates in purine metabolism; AMP biosynthesis via salvage pathway; AMP from ADP: step 1/1. Its function is as follows. Catalyzes the reversible transfer of the terminal phosphate group between ATP and AMP. Plays an important role in cellular energy homeostasis and in adenine nucleotide metabolism. This is Adenylate kinase from Pelagibacter ubique (strain HTCC1062).